Reading from the N-terminus, the 47-residue chain is Protein RL9A (47 aa).

Residues 27-47 (CMIIVIMIAISIWILTYVLFL) form a helical membrane-spanning segment.

The protein localises to the host membrane. The protein is Protein RL9A (RL9A) of Human cytomegalovirus (strain Merlin) (HHV-5).